The primary structure comprises 143 residues: Large-conductance mechanosensitive channel (143 aa).

A run of 2 helical transmembrane segments spans residues 10–30 (FAVK…GAFS) and 89–109 (GSFI…FLMV).

Belongs to the MscL family. As to quaternary structure, homopentamer.

It localises to the cell inner membrane. In terms of biological role, channel that opens in response to stretch forces in the membrane lipid bilayer. May participate in the regulation of osmotic pressure changes within the cell. The polypeptide is Large-conductance mechanosensitive channel (Burkholderia multivorans (strain ATCC 17616 / 249)).